A 485-amino-acid chain; its full sequence is 6-phosphogluconate dehydrogenase, decarboxylating (485 aa).

NADP(+)-binding positions include 12–17, 35–37, 77–79, and asparagine 105; these read GLAVMG, NRT, and VKA. Residues asparagine 105 and 131–133 contribute to the substrate site; that span reads SGG. Residue lysine 186 is the Proton acceptor of the active site. 189–190 serves as a coordination point for substrate; it reads HN. The Proton donor role is filled by glutamate 193. Residues tyrosine 194, lysine 263, arginine 290, arginine 449, and histidine 455 each contribute to the substrate site.

Belongs to the 6-phosphogluconate dehydrogenase family. In terms of assembly, homodimer.

The enzyme catalyses 6-phospho-D-gluconate + NADP(+) = D-ribulose 5-phosphate + CO2 + NADPH. Its pathway is carbohydrate degradation; pentose phosphate pathway; D-ribulose 5-phosphate from D-glucose 6-phosphate (oxidative stage): step 3/3. Functionally, catalyzes the oxidative decarboxylation of 6-phosphogluconate to ribulose 5-phosphate and CO(2), with concomitant reduction of NADP to NADPH. The sequence is that of 6-phosphogluconate dehydrogenase, decarboxylating (6-PGD) from Cunninghamella elegans.